We begin with the raw amino-acid sequence, 329 residues long: MTTSDLVAGELAGDGLRDTRPGDTWLADRSWNRPGWTVAELEAAKAGRTISVVLPALDEEDTIGSVIDSISPLVDGLVDELIVLDSGSTDDTEIRAVAAGARVVSREQALPEVPIRPGKGEALWRSLAASRGDIVVFVDSDLINPHPMFVPWLVGPLLTGDGVHLVKSFYRRPLNVGDAGGGAGATGGGRVTELVARPLLAALRPELGCILQPLGGEYAATRELLTSVPFAPGYGVEIGLLVDTFDRLGLDAIAQVNLGVREHRNRPLAELGAMSRQVIATLLSRCGIPDSGVGLTQFVADGPEGQSYTQHTWPVSLADRPPMQAIRPR.

UDP-alpha-D-glucose-binding positions include 55–59 (PALDE), S86, K119, and 139–141 (DSD). D141 is a binding site for Mn(2+). 189 to 192 (GRVT) contacts (2R)-3-phosphoglycerate. Position 234-237 (234-237 (YGVE)) interacts with UDP-alpha-D-glucose. Residue H263 participates in Mn(2+) binding. Residue N265 participates in (2R)-3-phosphoglycerate binding.

The protein belongs to the glycosyltransferase 2 family. As to quaternary structure, homodimer. The cofactor is Mg(2+). It depends on Mn(2+) as a cofactor.

It catalyses the reaction an NDP-alpha-D-glucose + (2R)-3-phosphoglycerate = (2R)-2-O-(alpha-D-glucopyranosyl)-3-phospho-glycerate + a ribonucleoside 5'-diphosphate + H(+). It carries out the reaction (2R)-3-phosphoglycerate + UDP-alpha-D-glucose = (2R)-2-O-(alpha-D-glucopyranosyl)-3-phospho-glycerate + UDP + H(+). The catalysed reaction is GDP-D-glucose + (2R)-3-phosphoglycerate = (2R)-2-O-(alpha-D-glucopyranosyl)-3-phospho-glycerate + GDP + H(+). In terms of biological role, involved in the biosynthesis of 6-O-methylglucose lipopolysaccarides (MGLPs). Catalyzes the transfer of the glucose moiety from UDP-alpha-D-glucose (UDP-Glc) to the position 2 of 3-phospho-D-glycerate (3-PGA) to form glucosyl-3-phosphoglycerate (GPG). To a lesser extent can also use GDP-Glc but not UDP-Gal or UDP-GlcNAc as the sugar donor. The polypeptide is Glucosyl-3-phosphoglycerate synthase (Mycolicibacterium paratuberculosis (strain ATCC BAA-968 / K-10) (Mycobacterium paratuberculosis)).